A 137-amino-acid polypeptide reads, in one-letter code: Type 3 secretion system pilotin (137 aa).

The first 14 residues, M1–S14, serve as a signal peptide directing secretion.

Belongs to the ExsB/YscW family.

Its subcellular location is the cell outer membrane. Its function is as follows. Involved in the synthesis of the type III secretion system (T3SS), also called injectisome, which is used to inject bacterial effector proteins into eukaryotic host cells. Pilot protein that is required for the proper localization of the secretin PscC in the outer membrane. Necessary for full in vivo virulence. The sequence is that of Type 3 secretion system pilotin from Pseudomonas aeruginosa (strain ATCC 15692 / DSM 22644 / CIP 104116 / JCM 14847 / LMG 12228 / 1C / PRS 101 / PAO1).